We begin with the raw amino-acid sequence, 310 residues long: Protein-L-isoaspartate O-methyltransferase (310 aa).

A disordered region spans residues 1–41 (MSGERAKRFPLALEDLKRAPRKSEGRPGERQTAGAVPKAAD). Basic and acidic residues predominate over residues 14–29 (EDLKRAPRKSEGRPGE). Ser157 is an active-site residue.

The protein belongs to the methyltransferase superfamily. L-isoaspartyl/D-aspartyl protein methyltransferase family.

Its subcellular location is the cytoplasm. The catalysed reaction is [protein]-L-isoaspartate + S-adenosyl-L-methionine = [protein]-L-isoaspartate alpha-methyl ester + S-adenosyl-L-homocysteine. Its function is as follows. Catalyzes the methyl esterification of L-isoaspartyl residues in peptides and proteins that result from spontaneous decomposition of normal L-aspartyl and L-asparaginyl residues. It plays a role in the repair and/or degradation of damaged proteins. This chain is Protein-L-isoaspartate O-methyltransferase, found in Burkholderia cenocepacia (strain HI2424).